Here is a 201-residue protein sequence, read N- to C-terminus: Large ribosomal subunit protein bL25 (201 aa).

It belongs to the bacterial ribosomal protein bL25 family. CTC subfamily. As to quaternary structure, part of the 50S ribosomal subunit; part of the 5S rRNA/L5/L18/L25 subcomplex. Contacts the 5S rRNA. Binds to the 5S rRNA independently of L5 and L18.

Functionally, this is one of the proteins that binds to the 5S RNA in the ribosome where it forms part of the central protuberance. This Burkholderia vietnamiensis (strain G4 / LMG 22486) (Burkholderia cepacia (strain R1808)) protein is Large ribosomal subunit protein bL25.